A 487-amino-acid chain; its full sequence is Homeobox protein homothorax (487 aa).

Disordered regions lie at residues 25–49, 210–292, and 333–369; these read YDPHAGHRPPGLQGLPSHHSPHMTH, DTTK…SSLN, and NFGTSASGDASNASIGSGEGTGEEDDDASGKKNQKKR. The MEIS N-terminal domain occupies 127–211; it reads GGDVCSSESF…IDLVIDERDT (85 aa). 2 stretches are compositionally biased toward polar residues: residues 227–237 and 333–345; these read NADSTSHTDGA and NFGTSASGDASNA. The homeobox; TALE-type DNA-binding region spans 365–427; sequence NQKKRGIFPK…NARRRIVQPM (63 aa).

The protein belongs to the TALE/MEIS homeobox family. Interacts with exd; required for nuclear translocation of exd. In terms of tissue distribution, in the wing disk, the expression is present in the regions corresponding to notum, wing hinge and ventral pleura. In the leg disk, the expression is in the periphery region, corresponding to the proximal segments of the legs. In the antennal disk, the expression is in all but the arista region. In the eye disk, the expression is strong in the anterior region surrounding the eye field, including the regions corresponding to ptilinum, ocellus and head capsules, and weak in the posterior and lateral margins of the eye disk. Expressed specifically in maturating inner photoreceptors of the DRA and maintained through adulthood.

It localises to the nucleus. All isoforms are required for patterning of the embryonic cuticle. Acts with exd to delimit the eye field and prevent inappropriate eye development. Isoforms that carry the homeodomain are required for proper localization of chordotonal organs within the peripheral nervous system and antennal identity; required to activate antennal-specific genes, such as sal and to repress the leg-like expression of dac. Necessary for the nuclear localization of the essential HOX cofactor, extradenticle (exd). Both necessary and sufficient for inner photoreceptors to adopt the polarization-sensitive 'dorsal rim area' (DRA) of the eye fate instead of the color-sensitive default state. This occurs by increasing rhabdomere size and uncoupling R7-R8 communication to allow both cells to express the same opsin rather than different ones as required for color vision. In Drosophila melanogaster (Fruit fly), this protein is Homeobox protein homothorax.